The chain runs to 87 residues: UPF0250 protein SG0794 (87 aa).

It belongs to the UPF0250 family.

This Sodalis glossinidius (strain morsitans) protein is UPF0250 protein SG0794.